Reading from the N-terminus, the 239-residue chain is Tumor protein p53-inducible nuclear protein 1 (239 aa).

Positions 25 to 37 (EKEDDEWILVDFI) match the LIR motif.

In terms of assembly, interacts with p53/TP53 and HIPK2. Interacts with PRKCG, GABARAP, GABARAPL1, GABARAPL2, MAP1LC3A, MAP1LC3B and MAP1LC3C. In terms of tissue distribution, specifically expressed by acinar cells of chronic pancreatitis tissue.

The protein localises to the cytoplasm. It localises to the cytosol. The protein resides in the nucleus. It is found in the PML body. Its subcellular location is the cytoplasmic vesicle. The protein localises to the autophagosome. Its function is as follows. Antiproliferative and proapoptotic protein involved in cell stress response which acts as a dual regulator of transcription and autophagy. Acts as a positive regulator of autophagy. In response to cellular stress or activation of autophagy, relocates to autophagosomes where it interacts with autophagosome-associated proteins GABARAP, GABARAPL1/L2, MAP1LC3A/B/C and regulates autophagy. Acts as an antioxidant and plays a major role in p53/TP53-driven oxidative stress response. Possesses both a p53/TP53-independent intracellular reactive oxygen species (ROS) regulatory function and a p53/TP53-dependent transcription regulatory function. Positively regulates p53/TP53 and p73/TP73 and stimulates their capacity to induce apoptosis and regulate cell cycle. In response to double-strand DNA breaks, promotes p53/TP53 phosphorylation on 'Ser-46' and subsequent apoptosis. Acts as a tumor suppressor by inducing cell death by an autophagy and caspase-dependent mechanism. Can reduce cell migration by regulating the expression of SPARC. The polypeptide is Tumor protein p53-inducible nuclear protein 1 (Trp53inp1) (Rattus norvegicus (Rat)).